The following is a 214-amino-acid chain: Probable transaldolase (214 aa).

The active-site Schiff-base intermediate with substrate is lysine 83.

This sequence belongs to the transaldolase family. Type 3B subfamily.

The protein localises to the cytoplasm. The enzyme catalyses D-sedoheptulose 7-phosphate + D-glyceraldehyde 3-phosphate = D-erythrose 4-phosphate + beta-D-fructose 6-phosphate. The protein operates within carbohydrate degradation; pentose phosphate pathway; D-glyceraldehyde 3-phosphate and beta-D-fructose 6-phosphate from D-ribose 5-phosphate and D-xylulose 5-phosphate (non-oxidative stage): step 2/3. Its function is as follows. Transaldolase is important for the balance of metabolites in the pentose-phosphate pathway. The chain is Probable transaldolase from Leptospira interrogans serogroup Icterohaemorrhagiae serovar copenhageni (strain Fiocruz L1-130).